We begin with the raw amino-acid sequence, 262 residues long: Acyl-[acyl-carrier-protein]--UDP-N-acetylglucosamine O-acyltransferase (262 aa).

It belongs to the transferase hexapeptide repeat family. LpxA subfamily. As to quaternary structure, homotrimer.

The protein resides in the cytoplasm. It catalyses the reaction a (3R)-hydroxyacyl-[ACP] + UDP-N-acetyl-alpha-D-glucosamine = a UDP-3-O-[(3R)-3-hydroxyacyl]-N-acetyl-alpha-D-glucosamine + holo-[ACP]. Its pathway is glycolipid biosynthesis; lipid IV(A) biosynthesis; lipid IV(A) from (3R)-3-hydroxytetradecanoyl-[acyl-carrier-protein] and UDP-N-acetyl-alpha-D-glucosamine: step 1/6. In terms of biological role, involved in the biosynthesis of lipid A, a phosphorylated glycolipid that anchors the lipopolysaccharide to the outer membrane of the cell. The polypeptide is Acyl-[acyl-carrier-protein]--UDP-N-acetylglucosamine O-acyltransferase (Erwinia tasmaniensis (strain DSM 17950 / CFBP 7177 / CIP 109463 / NCPPB 4357 / Et1/99)).